A 466-amino-acid chain; its full sequence is tRNA-2-methylthio-N(6)-dimethylallyladenosine synthase (466 aa).

Positions 2–118 (KRFYIHTIGC…LPGHIQAVAH (117 aa)) constitute an MTTase N-terminal domain. [4Fe-4S] cluster contacts are provided by Cys11, Cys47, Cys81, Cys157, Cys161, and Cys164. Residues 143 to 372 (DSSGVTGFIT…LELQNRITAE (230 aa)) enclose the Radical SAM core domain. A TRAM domain is found at 375-453 (RALEGRVEQV…AHSLSGIAVG (79 aa)).

It belongs to the methylthiotransferase family. MiaB subfamily. In terms of assembly, monomer. It depends on [4Fe-4S] cluster as a cofactor.

The protein localises to the cytoplasm. It carries out the reaction N(6)-dimethylallyladenosine(37) in tRNA + (sulfur carrier)-SH + AH2 + 2 S-adenosyl-L-methionine = 2-methylsulfanyl-N(6)-dimethylallyladenosine(37) in tRNA + (sulfur carrier)-H + 5'-deoxyadenosine + L-methionine + A + S-adenosyl-L-homocysteine + 2 H(+). Its function is as follows. Catalyzes the methylthiolation of N6-(dimethylallyl)adenosine (i(6)A), leading to the formation of 2-methylthio-N6-(dimethylallyl)adenosine (ms(2)i(6)A) at position 37 in tRNAs that read codons beginning with uridine. The chain is tRNA-2-methylthio-N(6)-dimethylallyladenosine synthase from Desulfosudis oleivorans (strain DSM 6200 / JCM 39069 / Hxd3) (Desulfococcus oleovorans).